We begin with the raw amino-acid sequence, 318 residues long: Acetyl-coenzyme A carboxylase carboxyl transferase subunit alpha (318 aa).

The CoA carboxyltransferase C-terminal domain occupies K38–A292.

This sequence belongs to the AccA family. Acetyl-CoA carboxylase is a heterohexamer composed of biotin carboxyl carrier protein (AccB), biotin carboxylase (AccC) and two subunits each of ACCase subunit alpha (AccA) and ACCase subunit beta (AccD).

It localises to the cytoplasm. It carries out the reaction N(6)-carboxybiotinyl-L-lysyl-[protein] + acetyl-CoA = N(6)-biotinyl-L-lysyl-[protein] + malonyl-CoA. It participates in lipid metabolism; malonyl-CoA biosynthesis; malonyl-CoA from acetyl-CoA: step 1/1. In terms of biological role, component of the acetyl coenzyme A carboxylase (ACC) complex. First, biotin carboxylase catalyzes the carboxylation of biotin on its carrier protein (BCCP) and then the CO(2) group is transferred by the carboxyltransferase to acetyl-CoA to form malonyl-CoA. This Listeria innocua serovar 6a (strain ATCC BAA-680 / CLIP 11262) protein is Acetyl-coenzyme A carboxylase carboxyl transferase subunit alpha.